A 25-amino-acid polypeptide reads, in one-letter code: Superoxide dismutase [Mn], mitochondrial (25 aa).

Position 9 (histidine 9) interacts with Mn(2+).

The protein belongs to the iron/manganese superoxide dismutase family. As to quaternary structure, homotetramer. The cofactor is Mn(2+).

It localises to the mitochondrion matrix. The enzyme catalyses 2 superoxide + 2 H(+) = H2O2 + O2. In terms of biological role, destroys superoxide anion radicals which are normally produced within the cells and which are toxic to biological systems. This chain is Superoxide dismutase [Mn], mitochondrial, found in Alternaria alternata (Alternaria rot fungus).